A 726-amino-acid chain; its full sequence is Phenylalanine--tRNA ligase beta subunit (726 aa).

The 113-residue stretch at 38 to 150 (FSSSKGLLFA…NFASLNDDAS (113 aa)) folds into the tRNA-binding domain. In terms of domain architecture, B5 spans 394–467 (DKKVEINFDE…RFYNYDNFKE (74 aa)). 4 residues coordinate Mg(2+): D445, D451, E454, and E455.

It belongs to the phenylalanyl-tRNA synthetase beta subunit family. Type 1 subfamily. In terms of assembly, tetramer of two alpha and two beta subunits. The cofactor is Mg(2+).

Its subcellular location is the cytoplasm. It catalyses the reaction tRNA(Phe) + L-phenylalanine + ATP = L-phenylalanyl-tRNA(Phe) + AMP + diphosphate + H(+). This Mycoplasmopsis synoviae (strain 53) (Mycoplasma synoviae) protein is Phenylalanine--tRNA ligase beta subunit.